Here is a 120-residue protein sequence, read N- to C-terminus: Large ribosomal subunit protein bL20 (120 aa).

The protein belongs to the bacterial ribosomal protein bL20 family.

Binds directly to 23S ribosomal RNA and is necessary for the in vitro assembly process of the 50S ribosomal subunit. It is not involved in the protein synthesizing functions of that subunit. The chain is Large ribosomal subunit protein bL20 from Novosphingobium aromaticivorans (strain ATCC 700278 / DSM 12444 / CCUG 56034 / CIP 105152 / NBRC 16084 / F199).